The sequence spans 569 residues: Retrotransposon Gag-like protein 5 (569 aa).

Disordered stretches follow at residues 115 to 151 (DGPADPPLLPIPPPPALPPPASKEPPPQPPLAPLERP) and 323 to 506 (RNII…PSRR). Over residues 117–146 (PADPPLLPIPPPPALPPPASKEPPPQPPLA) the composition is skewed to pro residues. Acidic residues predominate over residues 334–350 (NEEESEDEEYYSEDEDQ). Basic residues predominate over residues 353 to 367 (RRHRLHSKDQRKRMR). 2 stretches are compositionally biased toward basic and acidic residues: residues 372–392 (EMKEKEEEEMKKEEEMKKKEE) and 401–415 (MKQKEEEEEIRNKNE). Composition is skewed to acidic residues over residues 416–429 (EEGESKDEEDEDED) and 443–469 (GTEETYGEVEEEPLDEAQDDDLDELME). A compositionally biased stretch (polar residues) spans 476 to 485 (HASSQTSGPT).

This Homo sapiens (Human) protein is Retrotransposon Gag-like protein 5.